We begin with the raw amino-acid sequence, 101 residues long: Large ribosomal subunit protein bL21 (101 aa).

This sequence belongs to the bacterial ribosomal protein bL21 family. As to quaternary structure, part of the 50S ribosomal subunit. Contacts protein L20.

This protein binds to 23S rRNA in the presence of protein L20. The chain is Large ribosomal subunit protein bL21 from Anaeromyxobacter dehalogenans (strain 2CP-1 / ATCC BAA-258).